The primary structure comprises 371 residues: Forkhead box protein E1 (371 aa).

The tract at residues 21-53 (EERGEAAAAGAGVPAEAAGRGAGGRRRKRPLQR) is disordered. Residues 26 to 39 (AAAAGAGVPAEAAG) are compositionally biased toward low complexity. Residues 43 to 52 (GGRRRKRPLQ) show a composition bias toward basic residues. A DNA-binding region (fork-head) is located at residues 55–149 (KPPYSYIALI…ESGSFLRRRK (95 aa)).

Post-translationally, phosphorylated. In terms of tissue distribution, expressed in Rathke pouch, in thyroid, and in the epithelium of the pharyngeal wall and arches, whereas it is absent in the epithelium of the pharyngeal pouches.

It is found in the nucleus. In terms of biological role, transcription factor that binds consensus sites on a variety of gene promoters and activate their transcription. Involved in proper palate formation, most probably through the expression of MSX1 and TGFB3 genes which are direct targets of this transcription factor. Also implicated in thyroid gland morphogenesis. May indirectly play a role in cell growth and migration through the regulation of WNT5A expression. This Mus musculus (Mouse) protein is Forkhead box protein E1 (Foxe1).